The chain runs to 173 residues: Small ribosomal subunit protein uS5 (173 aa).

Positions 17-80 (WQERVIQIRR…ADGKKQLIEV (64 aa)) constitute an S5 DRBM domain.

Belongs to the universal ribosomal protein uS5 family. Part of the 30S ribosomal subunit. Contacts proteins S4 and S8.

Functionally, with S4 and S12 plays an important role in translational accuracy. In terms of biological role, located at the back of the 30S subunit body where it stabilizes the conformation of the head with respect to the body. The chain is Small ribosomal subunit protein uS5 from Microcystis aeruginosa (strain NIES-843 / IAM M-2473).